The primary structure comprises 440 residues: UDP-N-acetylmuramoylalanine--D-glutamate ligase (440 aa).

113-119 serves as a coordination point for ATP; sequence GTNGKST.

The protein belongs to the MurCDEF family.

It localises to the cytoplasm. The catalysed reaction is UDP-N-acetyl-alpha-D-muramoyl-L-alanine + D-glutamate + ATP = UDP-N-acetyl-alpha-D-muramoyl-L-alanyl-D-glutamate + ADP + phosphate + H(+). It participates in cell wall biogenesis; peptidoglycan biosynthesis. Its function is as follows. Cell wall formation. Catalyzes the addition of glutamate to the nucleotide precursor UDP-N-acetylmuramoyl-L-alanine (UMA). This is UDP-N-acetylmuramoylalanine--D-glutamate ligase (murD) from Buchnera aphidicola subsp. Schizaphis graminum (strain Sg).